The sequence spans 62 residues: Rhodotorucin-A peptides type 1 (62 aa).

The propeptide occupies 1 to 3 (MVA). Residue C14 is the site of S-farnesyl cysteine attachment. Residues 15–18 (TVSK) constitute a propeptide that is removed on maturation. C29 is lipidated: S-farnesyl cysteine. A propeptide spanning residues 30-33 (TVSK) is cleaved from the precursor. C44 carries the S-farnesyl cysteine lipid modification. A propeptide spanning residues 45 to 48 (TVSK) is cleaved from the precursor. C59 is lipidated: S-farnesyl cysteine. Residues 60–62 (TVA) constitute a propeptide that is removed on maturation.

The protein localises to the cell membrane. Rhodotorucin-A is a mating pheromone in cells of mating type A of Rhodosporidium toruloides. The polypeptide is Rhodotorucin-A peptides type 1 (RHA1) (Rhodotorula toruloides (Yeast)).